The primary structure comprises 187 residues: UPF0301 protein HS_0009 (187 aa).

Belongs to the UPF0301 (AlgH) family.

This chain is UPF0301 protein HS_0009, found in Histophilus somni (strain 129Pt) (Haemophilus somnus).